The primary structure comprises 209 residues: MLITEIFHSIQGEGPYAGLPMLFVRTNVCNIRCEWCDTKYSFYGGKEIPLSELLGIVKEAKEGWVCFTGGEPLVQRDALAFVKSVVDMGKNVLIETNGTISIRNFVFSDRIFIDMDVKPPSAKVTKGFLMDNLRYLRKQDYLKIVIKDDTDLDFAIDFVDRYGEGLSFVFQPAWGSDIRRIADRIVGTGYNVRVLPQIHKIIYGDVPGV.

Residues 10 to 12 (IQG) and R25 each bind substrate. The Radical SAM core domain occupies 16–205 (YAGLPMLFVR…PQIHKIIYGD (190 aa)). Residues C29, C33, and C36 each contribute to the [4Fe-4S] cluster site. T38 serves as a coordination point for Mg(2+). Position 68 (T68) interacts with substrate. S-adenosyl-L-methionine is bound at residue G70.

The protein belongs to the radical SAM superfamily. 7-carboxy-7-deazaguanine synthase family. Homodimer. Requires [4Fe-4S] cluster as cofactor. It depends on S-adenosyl-L-methionine as a cofactor. Mg(2+) serves as cofactor.

It catalyses the reaction 6-carboxy-5,6,7,8-tetrahydropterin + H(+) = 7-carboxy-7-deazaguanine + NH4(+). It participates in purine metabolism; 7-cyano-7-deazaguanine biosynthesis. Functionally, catalyzes the complex heterocyclic radical-mediated conversion of 6-carboxy-5,6,7,8-tetrahydropterin (CPH4) to 7-carboxy-7-deazaguanine (CDG), a step common to the biosynthetic pathways of all 7-deazapurine-containing compounds. The chain is 7-carboxy-7-deazaguanine synthase from Thermoplasma acidophilum (strain ATCC 25905 / DSM 1728 / JCM 9062 / NBRC 15155 / AMRC-C165).